The following is a 485-amino-acid chain: MSLFDHKISELKRLIHNKEISISDLVDESYKRIHEVDGKVQAFLQLDEEKARAYAKELDEALDTRDEHGLLFGMPIGIKDNIVTKDLRTTCASKILENFDPIYDATVVERLHEAEAVTIGKLNMDEFAMGSSTENSGFKKTKNPWNLETVPGGSSGGSAAAVAAGEVPFSLGSDTGGSIRQPASFCGVVGLKPTYGRVSRYGLVAFASSLDQIGPITRSVEDNAYLLQAISGVDKMDSTSANVDVPDYLSALTGDIKGLKIAVPKEYLGEGVSEEAKQSVLEALKVLESLGATWEEVSLPHSKYALATYYLLSSSEASANLARFDGIRYGYRTDNADNLIDLYKQTRSEGFGNEVKRRIMLGTFALSSGYYDAYYKKAQKVRTLIKKDFEDVFANYDVIIGPTTPTPAFKIGEKTSDPLTMYANDILTIPVNLAGVPGISVPCGFANGLPLGLQIIGKHFDESTVYRVAHAFEQATDHHKAKPEL.

Active-site charge relay system residues include Lys-79 and Ser-154. Ser-178 serves as the catalytic Acyl-ester intermediate.

The protein belongs to the amidase family. GatA subfamily. As to quaternary structure, heterotrimer of A, B and C subunits.

The catalysed reaction is L-glutamyl-tRNA(Gln) + L-glutamine + ATP + H2O = L-glutaminyl-tRNA(Gln) + L-glutamate + ADP + phosphate + H(+). Allows the formation of correctly charged Gln-tRNA(Gln) through the transamidation of misacylated Glu-tRNA(Gln) in organisms which lack glutaminyl-tRNA synthetase. The reaction takes place in the presence of glutamine and ATP through an activated gamma-phospho-Glu-tRNA(Gln). The protein is Glutamyl-tRNA(Gln) amidotransferase subunit A of Bacillus licheniformis (strain ATCC 14580 / DSM 13 / JCM 2505 / CCUG 7422 / NBRC 12200 / NCIMB 9375 / NCTC 10341 / NRRL NRS-1264 / Gibson 46).